A 312-amino-acid chain; its full sequence is Dihydroorotate dehydrogenase B (NAD(+)), catalytic subunit (312 aa).

Residues Ser-23 and 47–48 (KA) contribute to the FMN site. Residues Lys-47 and 71–75 (NAIGL) each bind substrate. Asn-103 and Asn-131 together coordinate FMN. Substrate is bound at residue Asn-131. Cys-134 (nucleophile) is an active-site residue. The FMN site is built by Lys-171 and Ile-197. 198-199 (NT) serves as a coordination point for substrate. FMN is bound by residues Gly-223, 249–250 (GG), and 271–272 (GT).

The protein belongs to the dihydroorotate dehydrogenase family. Type 1 subfamily. Heterotetramer of 2 PyrK and 2 PyrD type B subunits. It depends on FMN as a cofactor.

The protein localises to the cytoplasm. The catalysed reaction is (S)-dihydroorotate + NAD(+) = orotate + NADH + H(+). The protein operates within pyrimidine metabolism; UMP biosynthesis via de novo pathway; orotate from (S)-dihydroorotate (NAD(+) route): step 1/1. Functionally, catalyzes the conversion of dihydroorotate to orotate with NAD(+) as electron acceptor. The protein is Dihydroorotate dehydrogenase B (NAD(+)), catalytic subunit (pyrDB) of Streptococcus pneumoniae serotype 4 (strain ATCC BAA-334 / TIGR4).